The following is a 218-amino-acid chain: Ribose-5-phosphate isomerase A (218 aa).

Substrate contacts are provided by residues 28 to 31 (TGST), 81 to 84 (DGAD), and 94 to 97 (KGGG). Glu-103 functions as the Proton acceptor in the catalytic mechanism. Substrate is bound at residue Lys-121.

This sequence belongs to the ribose 5-phosphate isomerase family. In terms of assembly, homodimer.

It catalyses the reaction aldehydo-D-ribose 5-phosphate = D-ribulose 5-phosphate. It functions in the pathway carbohydrate degradation; pentose phosphate pathway; D-ribose 5-phosphate from D-ribulose 5-phosphate (non-oxidative stage): step 1/1. In terms of biological role, catalyzes the reversible conversion of ribose-5-phosphate to ribulose 5-phosphate. The chain is Ribose-5-phosphate isomerase A from Thioalkalivibrio sulfidiphilus (strain HL-EbGR7).